The chain runs to 258 residues: 5'-nucleotidase SurE (258 aa).

The a divalent metal cation site is built by D9, D10, S40, and N95.

It belongs to the SurE nucleotidase family. A divalent metal cation serves as cofactor.

Its subcellular location is the cytoplasm. It carries out the reaction a ribonucleoside 5'-phosphate + H2O = a ribonucleoside + phosphate. In terms of biological role, nucleotidase that shows phosphatase activity on nucleoside 5'-monophosphates. The polypeptide is 5'-nucleotidase SurE (Nitratiruptor sp. (strain SB155-2)).